We begin with the raw amino-acid sequence, 306 residues long: Ornithine carbamoyltransferase (306 aa).

Carbamoyl phosphate contacts are provided by residues 54–57 (STRT), Gln-81, Arg-105, and 132–135 (HPLQ). L-ornithine is bound by residues Asn-162, Asp-226, and 230–231 (SM). Carbamoyl phosphate is bound by residues 266 to 267 (CL) and Arg-294.

The protein belongs to the aspartate/ornithine carbamoyltransferase superfamily. OTCase family.

It localises to the cytoplasm. The enzyme catalyses carbamoyl phosphate + L-ornithine = L-citrulline + phosphate + H(+). Its pathway is amino-acid biosynthesis; L-arginine biosynthesis; L-arginine from L-ornithine and carbamoyl phosphate: step 1/3. Reversibly catalyzes the transfer of the carbamoyl group from carbamoyl phosphate (CP) to the N(epsilon) atom of ornithine (ORN) to produce L-citrulline. This Sulfolobus acidocaldarius (strain ATCC 33909 / DSM 639 / JCM 8929 / NBRC 15157 / NCIMB 11770) protein is Ornithine carbamoyltransferase.